Consider the following 652-residue polypeptide: Probable L-type lectin-domain containing receptor kinase S.5 (652 aa).

The N-terminal stretch at 1-20 is a signal peptide; the sequence is MRFSLAWKLLFLILTCKIET. Over 21-266 the chain is Extracellular; it reads QVKCLKFDFP…EGLKIDGDGN (246 aa). The tract at residues 24 to 257 is legume-lectin like; the sequence is CLKFDFPGFN…LNCVRSWSFE (234 aa). Residues asparagine 33, asparagine 91, asparagine 97, asparagine 100, asparagine 122, asparagine 139, asparagine 201, and asparagine 244 are each glycosylated (N-linked (GlcNAc...) asparagine). A helical membrane pass occupies residues 267–287; the sequence is MLWLWITIPIVFIVGIGAFLG. The Cytoplasmic segment spans residues 288-652; sequence ALYLRSRSKA…INSLTELTGR (365 aa). In terms of domain architecture, Protein kinase spans 330 to 622; sequence FGAENKLGQG…PDVPTERPAF (293 aa). Residues 336–344 and lysine 357 each bind ATP; that span reads LGQGGFGMV. Aspartate 455 functions as the Proton acceptor in the catalytic mechanism.

The protein in the C-terminal section; belongs to the protein kinase superfamily. Ser/Thr protein kinase family. It in the N-terminal section; belongs to the leguminous lectin family.

The protein localises to the cell membrane. It carries out the reaction L-seryl-[protein] + ATP = O-phospho-L-seryl-[protein] + ADP + H(+). The catalysed reaction is L-threonyl-[protein] + ATP = O-phospho-L-threonyl-[protein] + ADP + H(+). This chain is Probable L-type lectin-domain containing receptor kinase S.5 (LECRKS5), found in Arabidopsis thaliana (Mouse-ear cress).